Consider the following 348-residue polypeptide: Putative methylthioribose-1-phosphate isomerase (348 aa).

Residues 55 to 57 (RGA), arginine 98, and glutamine 203 each bind substrate. The active-site Proton donor is aspartate 244. 253–254 (NK) lines the substrate pocket.

It belongs to the eIF-2B alpha/beta/delta subunits family. MtnA subfamily.

It catalyses the reaction 5-(methylsulfanyl)-alpha-D-ribose 1-phosphate = 5-(methylsulfanyl)-D-ribulose 1-phosphate. In terms of biological role, catalyzes the interconversion of methylthioribose-1-phosphate (MTR-1-P) into methylthioribulose-1-phosphate (MTRu-1-P). The protein is Putative methylthioribose-1-phosphate isomerase of Methanosarcina acetivorans (strain ATCC 35395 / DSM 2834 / JCM 12185 / C2A).